The primary structure comprises 313 residues: D-alanine--D-alanine ligase (313 aa).

Residues K108–S308 form the ATP-grasp domain. Residue V138 to Y193 coordinates ATP. Mg(2+) is bound by residues D262, E275, and N277.

The protein belongs to the D-alanine--D-alanine ligase family. Mg(2+) serves as cofactor. Requires Mn(2+) as cofactor.

The protein resides in the cytoplasm. It carries out the reaction 2 D-alanine + ATP = D-alanyl-D-alanine + ADP + phosphate + H(+). It participates in cell wall biogenesis; peptidoglycan biosynthesis. Functionally, cell wall formation. The sequence is that of D-alanine--D-alanine ligase from Burkholderia cenocepacia (strain HI2424).